Consider the following 509-residue polypeptide: tRNA-2-methylthio-N(6)-dimethylallyladenosine synthase (509 aa).

A compositionally biased stretch (polar residues) spans 1 to 15 (MNEQQRLASQQVNSS). A disordered region spans residues 1–23 (MNEQQRLASQQVNSSTKKEEKDY). Positions 66-184 (RKFYIRTYGC…LPYILKDAMF (119 aa)) constitute an MTTase N-terminal domain. The [4Fe-4S] cluster site is built by cysteine 75, cysteine 111, cysteine 145, cysteine 221, cysteine 225, and cysteine 228. The 231-residue stretch at 207-437 (RRGDIKAWVN…NALVNKLAIE (231 aa)) folds into the Radical SAM core domain. A TRAM domain is found at 440 to 503 (DRYKGQIVEV…TWSLNGELVE (64 aa)).

It belongs to the methylthiotransferase family. MiaB subfamily. Monomer. [4Fe-4S] cluster is required as a cofactor.

It is found in the cytoplasm. It carries out the reaction N(6)-dimethylallyladenosine(37) in tRNA + (sulfur carrier)-SH + AH2 + 2 S-adenosyl-L-methionine = 2-methylsulfanyl-N(6)-dimethylallyladenosine(37) in tRNA + (sulfur carrier)-H + 5'-deoxyadenosine + L-methionine + A + S-adenosyl-L-homocysteine + 2 H(+). Functionally, catalyzes the methylthiolation of N6-(dimethylallyl)adenosine (i(6)A), leading to the formation of 2-methylthio-N6-(dimethylallyl)adenosine (ms(2)i(6)A) at position 37 in tRNAs that read codons beginning with uridine. The polypeptide is tRNA-2-methylthio-N(6)-dimethylallyladenosine synthase (Bacillus anthracis).